The following is a 182-amino-acid chain: Ribosome-recycling factor (182 aa).

It belongs to the RRF family.

Its subcellular location is the cytoplasm. Functionally, responsible for the release of ribosomes from messenger RNA at the termination of protein biosynthesis. May increase the efficiency of translation by recycling ribosomes from one round of translation to another. This Gloeothece citriformis (strain PCC 7424) (Cyanothece sp. (strain PCC 7424)) protein is Ribosome-recycling factor.